Reading from the N-terminus, the 314-residue chain is Beta-ketoacyl-[acyl-carrier-protein] synthase III (314 aa).

Catalysis depends on residues cysteine 112 and histidine 241. Residues 242-246 (QANIR) form an ACP-binding region. The active site involves asparagine 271.

The protein belongs to the thiolase-like superfamily. FabH family. As to quaternary structure, homodimer.

Its subcellular location is the cytoplasm. The enzyme catalyses malonyl-[ACP] + acetyl-CoA + H(+) = 3-oxobutanoyl-[ACP] + CO2 + CoA. It participates in lipid metabolism; fatty acid biosynthesis. Functionally, catalyzes the condensation reaction of fatty acid synthesis by the addition to an acyl acceptor of two carbons from malonyl-ACP. Catalyzes the first condensation reaction which initiates fatty acid synthesis and may therefore play a role in governing the total rate of fatty acid production. Possesses both acetoacetyl-ACP synthase and acetyl transacylase activities. Its substrate specificity determines the biosynthesis of branched-chain and/or straight-chain of fatty acids. This Vesicomyosocius okutanii subsp. Calyptogena okutanii (strain HA) protein is Beta-ketoacyl-[acyl-carrier-protein] synthase III.